Here is a 476-residue protein sequence, read N- to C-terminus: ATP synthase subunit beta, mitochondrial (476 aa).

156–163 (GAGVGKTV) is an ATP binding site.

As to quaternary structure, F-type ATP synthases have 2 components, the catalytic core F(1) and the membrane-embedded component F(0), linked together by a central stalk and a peripheral stalk. The central stalk, also called rotor shaft, is often seen as part of F(1). The peripheral stalk is seen as part of F(0). F(0) contains the membrane channel next to the rotor. F-type ATP synthases form dimers but each monomer functions independently in ATP generation. The dimer consists of 18 different polypeptides: ATP1 (subunit alpha, part of F(1), 3 molecules per monomer), ATP2 (subunit beta, part of F(1), 3 molecules per monomer), ATP3 (subunit gamma, part of the central stalk), ATP4 (subunit b, part of the peripheral stalk), ATP5/OSCP (subunit 5/OSCP, part of the peripheral stalk), ATP6 (subunit a, part of the peripheral stalk), ATP7 (subunit d, part of the peripheral stalk), ATP8 (subunit 8, part of the peripheral stalk), OLI1 (subunit c, part of the rotor, 10 molecules per monomer), ATP14 (subunit h, part of the peripheral stalk), ATP15 (subunit epsilon, part of the central stalk), ATP16 (subunit delta, part of the central stalk), ATP17 (subunit f, part of the peripheral stalk), ATP18 (subunit i/j, part of the peripheral stalk). Dimer-specific subunits are ATP19 (subunit k, at interface between monomers), ATP20 (subunit g, at interface between monomers), TIM11 (subunit e, at interface between monomers). Also contains subunit L.

The protein resides in the mitochondrion inner membrane. The enzyme catalyses ATP + H2O + 4 H(+)(in) = ADP + phosphate + 5 H(+)(out). Mitochondrial membrane ATP synthase (F(1)F(0) ATP synthase or Complex V) produces ATP from ADP in the presence of a proton gradient across the membrane which is generated by electron transport complexes of the respiratory chain. F-type ATP synthases consist of two structural domains, F(1) - containing the extramembraneous catalytic core, and F(0) - containing the membrane proton channel, linked together by a central stalk and a peripheral stalk. During catalysis, ATP synthesis in the catalytic domain of F(1) is coupled via a rotary mechanism of the central stalk subunits to proton translocation. Subunits alpha/ATP1 and beta/ATP2 form the catalytic core in F(1). Rotation of the central stalk against the surrounding alpha/ATP1(3)beta/ATP2(3) subunits leads to hydrolysis of ATP in three separate catalytic sites on the beta/ATP2 subunits. The polypeptide is ATP synthase subunit beta, mitochondrial (Pichia angusta (Yeast)).